The primary structure comprises 493 residues: BICD family-like cargo adapter 2 (493 aa).

Coiled coils occupy residues 56–275 (ELGK…ELHM) and 365–431 (MQHV…LLST).

The protein belongs to the BICDR family.

In Xenopus laevis (African clawed frog), this protein is BICD family-like cargo adapter 2 (bicdl2).